The primary structure comprises 380 residues: Palmitoyltransferase ZDHHC18 (380 aa).

The segment at 1–59 is disordered; that stretch reads MKDCEYQQISPGAAPPPASPGARRPGPAAPPAPSPGPAPGAPRWSGSGSGSGSLGRRPR. The Cytoplasmic segment spans residues 1 to 82; the sequence is MKDCEYQQIS…CGGRLMLAGH (82 aa). Ser-19 bears the Phosphoserine mark. A compositionally biased stretch (pro residues) spans 27-40; it reads PAAPPAPSPGPAPG. A helical membrane pass occupies residues 83–103; it reads GGVFALTLLLILSTTILFFVF. Residues 104-111 lie on the Lumenal side of the membrane; it reads DCPYLART. A helical membrane pass occupies residues 112 to 132; that stretch reads LTLAIPIIAAILFFFVMSCLL. The Cytoplasmic portion of the chain corresponds to 133–227; the sequence is QTSFTDPGIL…GNCVGRRNYR (95 aa). Positions 184-234 constitute a DHHC domain; the sequence is KYCFTCKMFRPPRTSHCSVCDNCVERFDHHCPWVGNCVGRRNYRFFYAFIL. Catalysis depends on Cys-214, which acts as the S-palmitoyl cysteine intermediate. Residues 228–248 traverse the membrane as a helical segment; it reads FFYAFILSLSFLTAFIFACVV. Residues 249 to 269 are Lumenal-facing; sequence THLTLLSQGSNFLSALKKTPA. A helical membrane pass occupies residues 270 to 290; the sequence is SVLELVICFFSIWSILGLSGF. At 291–380 the chain is on the cytoplasmic side; that stretch reads HTYLVASNLT…PDASMVGGHP (90 aa). The interval 355 to 380 is disordered; the sequence is ALPSPIRSDDPACGAKPDASMVGGHP.

The protein belongs to the DHHC palmitoyltransferase family. ERF2/ZDHHC9 subfamily. Ubiquitously expressed.

Its subcellular location is the golgi apparatus membrane. It catalyses the reaction L-cysteinyl-[protein] + hexadecanoyl-CoA = S-hexadecanoyl-L-cysteinyl-[protein] + CoA. Its function is as follows. Palmitoyltransferase that catalyzes the addition of palmitate onto various protein substrates, such as CGAS, HRAS and LCK. Palmitoylates HRAS and LCK. Acts as a negative regulator of the cGAS-STING pathway be mediating palmitoylation and inactivation of CGAS. May also have a palmitoyltransferase activity toward the beta-2 adrenergic receptor/ADRB2 and therefore regulate G protein-coupled receptor signaling. The chain is Palmitoyltransferase ZDHHC18 from Mus musculus (Mouse).